Here is a 781-residue protein sequence, read N- to C-terminus: MERSGGNGGGGGGGGGGGGGYGGSGGGGGGAGVPSEGAAKGLSLLLAKSAEAASGRASQSTPRSAGMDGFLKSDERQRLAKERREEREKCLAAREQQILEKQKRAKLQYEKQIEERWRKLEEQRQREDQKRAAVEEKRKQKLREEEERLEAMMRRSLERTQQLELKKKCSWAGSPGPGGRDGESENTPPLPLTLATSTPPLDTGTTTAAAESTNACDKLSTSTMNLPKQTESPMSKHLSSSTVAISYSPDRALGSPLKSSYKSSPTRTTEKKKNTPISAMGDAGKGAMAGGEPSQMEKMKKGRVATSAASGGHGSPLRRCEPPEDISKRLSSPVKSKITSKTYPQSPKTAKPTYLGSPVKYYFPPIANEETPKKKAEKEKRNKEKEGAPGQQSTVLPREESLEKRMADKYATEKYVADKHATEKHSAPGGKAEHSAGKPTAGTTDAGEAAKILAEKRRQARLQKEQEEQERLEKEERERLEKEELKRKAEEERLRIEMAYKREQEKKRQEEEEKRKAEEKAKEKAEEELLSKEKQEKEKQEQEKKEKAMIEKQKEAAEAKAQDAAKQMRLEREQIMLQIEQERLERKKRIDEIMKRTRKSDASLEVKKEDPKVELQPPPDVENKANKAKPVVPNKIEINVLNTCQKVSGSERAAPETFPQDIFSTGLKPVGGPVHLDVLDGKSNSLDDSTEDVQSMDVSPVSKEELISIPEFSPVSEMIPGMSLDQNGTGNARALQDILDFTGPPAFPKKSSENLSLDDCNKNLIEGFNSPGQETTLNTFC.

A compositionally biased stretch (gly residues) spans Met1–Gly32. Disordered stretches follow at residues Met1–Gly37, Ala50–Arg87, Leu120–Gln567, and Thr597–Ala628. Basic and acidic residues-rich tracts occupy residues Leu71 to Arg87 and Leu120 to Glu158. Residues Ser73–Lys168 adopt a coiled-coil conformation. Over residues Leu192–Ala210 the composition is skewed to low complexity. Composition is skewed to polar residues over residues Glu211 to Ile245 and Leu257 to Arg267. Residues Arg318–Lys328 show a composition bias toward basic and acidic residues. The span at Arg329–Lys348 shows a compositional bias: polar residues. Composition is skewed to basic and acidic residues over residues Glu370–Gly387, Pro397–Ala436, Leu453–Gln567, and Thr597–Val613.

This sequence belongs to the MAP7 family. In terms of assembly, interacts (via N-terminus) with microtubules; facilitates microtubule stabilization. Interacts with kinesin-1 family members, KIF5A, KIF5B and KIF5C. In terms of tissue distribution, expressed predominantly in the glomerular layer of the olfactory bulb and Sertoli cells of the testis.

The protein localises to the cytoplasm. It is found in the cytoskeleton. Its subcellular location is the microtubule organizing center. It localises to the centrosome. The protein resides in the midbody. The protein localises to the cell projection. It is found in the neuron projection. Its subcellular location is the axon. Its function is as follows. Microtubule-stabilizing protein involved in the control of cell motility and neurite outgrowth. Acts as a critical cofactor for kinesin transport; in the proximal axon regulates kinesin-1 family members, KIF5A, KIF5B and KIF5C recruitment to microtubules and contributes to kinesin-1-mediated transport in the axons. The protein is MAP7 domain-containing protein 2 (Map7d2) of Mus musculus (Mouse).